The sequence spans 322 residues: Mitochondrial thiamine pyrophosphate carrier 1 (322 aa).

Solcar repeat units follow at residues 12 to 111 (GSKT…VTLG), 122 to 208 (PAAA…LRLP), and 215 to 310 (PFGS…VLGI). Helical transmembrane passes span 18–38 (MIAGATAGLIARFVIAPLDVV), 92–108 (LMYVSYSAIQFTTYRSV), 128–148 (FIAGASAGAVATTATYPLDLL), 180–200 (FFQGLGAGVGQIVPYMGIFFA), 221–241 (ASAGVIASVIAKTGIFPFDLI), and 285–302 (GLTVSLFKSAPASAVTMW).

Belongs to the mitochondrial carrier (TC 2.A.29) family.

It is found in the mitochondrion inner membrane. Mitochondrial transporter that mediates uptake of thiamine pyrophosphate (ThPP) into mitochondria. The chain is Mitochondrial thiamine pyrophosphate carrier 1 (tpc1) from Botryotinia fuckeliana (strain B05.10) (Noble rot fungus).